Here is a 292-residue protein sequence, read N- to C-terminus: Ribosomal RNA small subunit methyltransferase A (292 aa).

S-adenosyl-L-methionine-binding residues include Asn46, Leu48, Gly73, Glu94, Asp118, and Asn136.

Belongs to the class I-like SAM-binding methyltransferase superfamily. rRNA adenine N(6)-methyltransferase family. RsmA subfamily.

Its subcellular location is the cytoplasm. The enzyme catalyses adenosine(1518)/adenosine(1519) in 16S rRNA + 4 S-adenosyl-L-methionine = N(6)-dimethyladenosine(1518)/N(6)-dimethyladenosine(1519) in 16S rRNA + 4 S-adenosyl-L-homocysteine + 4 H(+). Its function is as follows. Specifically dimethylates two adjacent adenosines (A1518 and A1519) in the loop of a conserved hairpin near the 3'-end of 16S rRNA in the 30S particle. May play a critical role in biogenesis of 30S subunits. The protein is Ribosomal RNA small subunit methyltransferase A of Deinococcus radiodurans (strain ATCC 13939 / DSM 20539 / JCM 16871 / CCUG 27074 / LMG 4051 / NBRC 15346 / NCIMB 9279 / VKM B-1422 / R1).